The sequence spans 806 residues: DEP domain-containing protein 1A (806 aa).

A DEP domain is found at 24–108; the sequence is FRAAMPLRKH…DNNSLYRFPS (85 aa). Residues 142–177 form a disordered region; it reads QFSKKTPKRRASVDSKEEQENEDLMEDQRNDDDFPK. Over residues 167–177 the composition is skewed to basic and acidic residues; the sequence is EDQRNDDDFPK. The region spanning 279–319 is the Rho-GAP domain; sequence DYFLNLPEPLLTFEFYELFVNILVVCGYITVPNSHNGKHRF. Residues 564-588 are disordered; it reads SHSSFPSTSSLLPPTTSPNSTGSES.

In Xenopus laevis (African clawed frog), this protein is DEP domain-containing protein 1A (depdc1a).